The following is a 449-amino-acid chain: Zinc finger and BTB domain-containing protein 14 (449 aa).

One can recognise a BTB domain in the interval 36–102 (CDIAIVVEDV…MYTAKISVKK (67 aa)). K46 is covalently cross-linked (Glycyl lysine isopeptide (Lys-Gly) (interchain with G-Cter in SUMO2)). A Nuclear localization signal motif is present at residues 50–66 (HRCVLAACSTYFKKLFK). The disordered stretch occupies residues 153 to 194 (GDAADTQDDDVEEIGDQDDSPSDDTVEGTPPSQEDGKSPTTT). Positions 157–178 (DTQDDDVEEIGDQDDSPSDDTV) are enriched in acidic residues. Residues K203 and K249 each participate in a glycyl lysine isopeptide (Lys-Gly) (interchain with G-Cter in SUMO2) cross-link. C2H2-type zinc fingers lie at residues 277–304 (IACQ…ADRP), 305–332 (FVCE…GYKP), 333–360 (YSCE…NERP), 361–388 (FACH…GEKP), and 389–417 (FVCG…ERKQ).

It belongs to the krueppel C2H2-type zinc-finger protein family. As to quaternary structure, interacts with ZBTB21.

It localises to the nucleus. Transcriptional activator of the dopamine transporter (DAT), binding it's promoter at the consensus sequence 5'-CCTGCACAGTTCACGGA-3'. Binds to 5'-d(GCC)(n)-3' trinucleotide repeats in promoter regions and acts as a repressor of the FMR1 gene. Transcriptional repressor of MYC and thymidine kinase promoters. The polypeptide is Zinc finger and BTB domain-containing protein 14 (ZBTB14) (Homo sapiens (Human)).